We begin with the raw amino-acid sequence, 337 residues long: Low-density lipoprotein receptor class A domain-containing protein 3 (337 aa).

The first 13 residues, 1-13, serve as a signal peptide directing secretion; the sequence is MWLLYLILGSVES. Residues 14–169 are Extracellular-facing; that stretch reads QLLPGNNHTT…NQLLYYPSIT (156 aa). The N-linked (GlcNAc...) asparagine glycan is linked to asparagine 20. LDL-receptor class A domains follow at residues 24-61, 66-103, and 108-144; these read ECNI…KECP, RCGP…ENCT, and LCSN…EHCH. 9 disulfide bridges follow: cysteine 25-cysteine 38, cysteine 33-cysteine 51, cysteine 45-cysteine 60, cysteine 67-cysteine 80, cysteine 74-cysteine 93, cysteine 87-cysteine 102, cysteine 109-cysteine 121, cysteine 116-cysteine 134, and cysteine 128-cysteine 143. N-linked (GlcNAc...) asparagine glycosylation is present at asparagine 101. The chain crosses the membrane as a helical span at residues 170–190; the sequence is YTIIGSSVIFVLVVALLALVL. Residues 191–337 are Cytoplasmic-facing; it reads HHQRKRNLMS…DDLPSTEVDV (147 aa). Over residues 243-253 the composition is skewed to polar residues; sequence QQPVSVESPPS. A disordered region spans residues 243–337; sequence QQPVSVESPP…DDLPSTEVDV (95 aa). Over residues 291–303 the composition is skewed to low complexity; it reads RSRTGSSASAGST.

It belongs to the LDLR family.

It localises to the cell membrane. This chain is Low-density lipoprotein receptor class A domain-containing protein 3, found in Xenopus tropicalis (Western clawed frog).